The primary structure comprises 198 residues: B9 domain-containing protein 1 (198 aa).

One can recognise a C2 B9-type domain in the interval 8 to 126 (FLLNVSGQIE…TIPMFVPESS (119 aa)).

It belongs to the B9D family. In terms of assembly, part of the tectonic-like complex (also named B9 complex).

Its subcellular location is the cytoplasm. It is found in the cytoskeleton. The protein localises to the cilium basal body. In terms of biological role, component of the tectonic-like complex, a complex localized at the transition zone of primary cilia and acting as a barrier that prevents diffusion of transmembrane proteins between the cilia and plasma membranes. Required for ciliogenesis and sonic hedgehog/SHH signaling. This is B9 domain-containing protein 1 (b9d1) from Xenopus laevis (African clawed frog).